We begin with the raw amino-acid sequence, 434 residues long: Protein trichome birefringence-like 3 (434 aa).

The helical; Signal-anchor for type II membrane protein transmembrane segment at 15 to 35 threads the bilayer; that stretch reads IPLSIIVLVLCGFMFFILLYT. Residues 166–168 carry the GDS motif motif; the sequence is GDS. The DCXHWCLPGXXDXWN motif signature appears at 413–427; sequence DCIHWCLPGLPDTWN.

This sequence belongs to the PC-esterase family. TBL subfamily.

It localises to the golgi apparatus membrane. Functionally, involved in secondary cell wall cellulose deposition. Required for normal stem development. May act as a bridging protein that binds pectin and other cell wall polysaccharides. Probably involved in maintaining esterification of pectins. May be involved in the specific O-acetylation of cell wall polymers. The sequence is that of Protein trichome birefringence-like 3 (TBL3) from Arabidopsis thaliana (Mouse-ear cress).